A 329-amino-acid chain; its full sequence is Endonuclease 8-like 2 (329 aa).

Catalysis depends on Pro-2, which acts as the Schiff-base intermediate with DNA. The Proton donor role is filled by Glu-3. The active-site Proton donor; for beta-elimination activity is Lys-50. At Lys-50 the chain carries N6-acetyllysine. At Ser-68 the chain carries Phosphoserine. The interval 88–112 (GPSAQEPSAGPSGSGEPVPSRSAET) is disordered. Lys-150 bears the N6-acetyllysine mark. Asn-227 is a binding site for DNA. The segment at 280–316 (QIYQKEQCPSGHQVMKETFGPPDGLQRLTWWCPQCQP) adopts an FPG-type zinc-finger fold. The active-site Proton donor; for delta-elimination activity is Arg-306.

Belongs to the FPG family. In terms of assembly, binds EP300.

The protein resides in the nucleus. It catalyses the reaction 2'-deoxyribonucleotide-(2'-deoxyribose 5'-phosphate)-2'-deoxyribonucleotide-DNA = a 3'-end 2'-deoxyribonucleotide-(2,3-dehydro-2,3-deoxyribose 5'-phosphate)-DNA + a 5'-end 5'-phospho-2'-deoxyribonucleoside-DNA + H(+). With respect to regulation, acetylation of Lys-50 leads to loss of DNA nicking activity. In terms of biological role, involved in base excision repair of DNA damaged by oxidation or by mutagenic agents. Has DNA glycosylase activity towards 5-hydroxyuracil and other oxidized derivatives of cytosine with a preference for mismatched double-stranded DNA (DNA bubbles). Has low or no DNA glycosylase activity towards thymine glycol, 2-hydroxyadenine, hypoxanthine and 8-oxoguanine. Has AP (apurinic/apyrimidinic) lyase activity and introduces nicks in the DNA strand. Cleaves the DNA backbone by beta-delta elimination to generate a single-strand break at the site of the removed base with both 3'- and 5'-phosphates. The polypeptide is Endonuclease 8-like 2 (Neil2) (Mus musculus (Mouse)).